A 69-amino-acid polypeptide reads, in one-letter code: Cytochrome c oxidase subunit 8A, mitochondrial (69 aa).

The N-terminal 25 residues, 1 to 25 (MSVLTPLLLRGLTGSARRLPMPCAR), are a transit peptide targeting the mitochondrion. Residues 2–19 (SVLTPLLLRGLTGSARRL) carry the SIFI-degron motif. Residues 26–36 (VHSKPPREQLG) are Mitochondrial matrix-facing. Residues 37–60 (TMDIAIGLTSCFVCFLLPSGWVLS) form a helical membrane-spanning segment. Residues 61–69 (HLENYKKRE) are Mitochondrial intermembrane-facing.

Belongs to the cytochrome c oxidase VIII family. Component of the cytochrome c oxidase (complex IV, CIV), a multisubunit enzyme composed of 14 subunits. The complex is composed of a catalytic core of 3 subunits MT-CO1, MT-CO2 and MT-CO3, encoded in the mitochondrial DNA, and 11 supernumerary subunits COX4I, COX5A, COX5B, COX6A, COX6B, COX6C, COX7A, COX7B, COX7C, COX8 and NDUFA4, which are encoded in the nuclear genome. The complex exists as a monomer or a dimer and forms supercomplexes (SCs) in the inner mitochondrial membrane with NADH-ubiquinone oxidoreductase (complex I, CI) and ubiquinol-cytochrome c oxidoreductase (cytochrome b-c1 complex, complex III, CIII), resulting in different assemblies (supercomplex SCI(1)III(2)IV(1) and megacomplex MCI(2)III(2)IV(2)). Post-translationally, in response to mitochondrial stress, the precursor protein is ubiquitinated by the SIFI complex in the cytoplasm before mitochondrial import, leading to its degradation. Within the SIFI complex, UBR4 initiates ubiquitin chain that are further elongated or branched by KCMF1.

It localises to the mitochondrion inner membrane. It participates in energy metabolism; oxidative phosphorylation. Functionally, component of the cytochrome c oxidase, the last enzyme in the mitochondrial electron transport chain which drives oxidative phosphorylation. The respiratory chain contains 3 multisubunit complexes succinate dehydrogenase (complex II, CII), ubiquinol-cytochrome c oxidoreductase (cytochrome b-c1 complex, complex III, CIII) and cytochrome c oxidase (complex IV, CIV), that cooperate to transfer electrons derived from NADH and succinate to molecular oxygen, creating an electrochemical gradient over the inner membrane that drives transmembrane transport and the ATP synthase. Cytochrome c oxidase is the component of the respiratory chain that catalyzes the reduction of oxygen to water. Electrons originating from reduced cytochrome c in the intermembrane space (IMS) are transferred via the dinuclear copper A center (CU(A)) of subunit 2 and heme A of subunit 1 to the active site in subunit 1, a binuclear center (BNC) formed by heme A3 and copper B (CU(B)). The BNC reduces molecular oxygen to 2 water molecules using 4 electrons from cytochrome c in the IMS and 4 protons from the mitochondrial matrix. The protein is Cytochrome c oxidase subunit 8A, mitochondrial (COX8A) of Nycticebus coucang (Slow loris).